The sequence spans 264 residues: Thymidylate synthase (264 aa).

Residues arginine 21 and arginine 126 to arginine 127 contribute to the dUMP site. Catalysis depends on cysteine 146, which acts as the Nucleophile. DUMP contacts are provided by residues arginine 166 to aspartate 169, asparagine 177, and histidine 207 to tyrosine 209. Aspartate 169 provides a ligand contact to (6R)-5,10-methylene-5,6,7,8-tetrahydrofolate. Alanine 263 is a binding site for (6R)-5,10-methylene-5,6,7,8-tetrahydrofolate.

Belongs to the thymidylate synthase family. Bacterial-type ThyA subfamily. Homodimer.

The protein resides in the cytoplasm. The enzyme catalyses dUMP + (6R)-5,10-methylene-5,6,7,8-tetrahydrofolate = 7,8-dihydrofolate + dTMP. The protein operates within pyrimidine metabolism; dTTP biosynthesis. In terms of biological role, catalyzes the reductive methylation of 2'-deoxyuridine-5'-monophosphate (dUMP) to 2'-deoxythymidine-5'-monophosphate (dTMP) while utilizing 5,10-methylenetetrahydrofolate (mTHF) as the methyl donor and reductant in the reaction, yielding dihydrofolate (DHF) as a by-product. This enzymatic reaction provides an intracellular de novo source of dTMP, an essential precursor for DNA biosynthesis. This chain is Thymidylate synthase, found in Bradyrhizobium diazoefficiens (strain JCM 10833 / BCRC 13528 / IAM 13628 / NBRC 14792 / USDA 110).